Consider the following 194-residue polypeptide: Peptidyl-tRNA hydrolase (194 aa).

Tyr17 serves as a coordination point for tRNA. The Proton acceptor role is filled by His22. Residues Phe68, Asn70, and Asn116 each contribute to the tRNA site.

This sequence belongs to the PTH family. Monomer.

Its subcellular location is the cytoplasm. It catalyses the reaction an N-acyl-L-alpha-aminoacyl-tRNA + H2O = an N-acyl-L-amino acid + a tRNA + H(+). Functionally, hydrolyzes ribosome-free peptidyl-tRNAs (with 1 or more amino acids incorporated), which drop off the ribosome during protein synthesis, or as a result of ribosome stalling. Catalyzes the release of premature peptidyl moieties from peptidyl-tRNA molecules trapped in stalled 50S ribosomal subunits, and thus maintains levels of free tRNAs and 50S ribosomes. This Shewanella sediminis (strain HAW-EB3) protein is Peptidyl-tRNA hydrolase.